The chain runs to 72 residues: Conotoxin LvVIA (72 aa).

The first 17 residues, 1–17, serve as a signal peptide directing secretion; sequence VLIIAVLFLTASELVTA. Residues 18–41 constitute a propeptide that is removed on maturation; that stretch reads DYTRDKWQYRAASLRDAMRNFRDT. 3 disulfides stabilise this stretch: C44–C58, C51–C63, and C57–C70.

The protein belongs to the conotoxin O1 superfamily. As to expression, expressed by the venom duct.

The protein resides in the secreted. The chain is Conotoxin LvVIA from Conus lividus (Livid cone).